A 557-amino-acid polypeptide reads, in one-letter code: Formate--tetrahydrofolate ligase 2 (557 aa).

ATP is bound at residue 66-73 (TPAGEGKT).

This sequence belongs to the formate--tetrahydrofolate ligase family.

The enzyme catalyses (6S)-5,6,7,8-tetrahydrofolate + formate + ATP = (6R)-10-formyltetrahydrofolate + ADP + phosphate. The protein operates within one-carbon metabolism; tetrahydrofolate interconversion. In Streptococcus pyogenes serotype M5 (strain Manfredo), this protein is Formate--tetrahydrofolate ligase 2.